We begin with the raw amino-acid sequence, 512 residues long: Probable DNA ligase (512 aa).

ATP is bound at residue Asp217. Lys219 acts as the N6-AMP-lysine intermediate in catalysis. Positions 224, 239, 268, 306, 377, and 383 each coordinate ATP.

The protein belongs to the ATP-dependent DNA ligase family. Mg(2+) serves as cofactor.

It catalyses the reaction ATP + (deoxyribonucleotide)n-3'-hydroxyl + 5'-phospho-(deoxyribonucleotide)m = (deoxyribonucleotide)n+m + AMP + diphosphate.. Functionally, DNA ligase that seals nicks in double-stranded DNA during DNA replication, DNA recombination and DNA repair. The polypeptide is Probable DNA ligase (Beutenbergia cavernae (strain ATCC BAA-8 / DSM 12333 / CCUG 43141 / JCM 11478 / NBRC 16432 / NCIMB 13614 / HKI 0122)).